A 607-amino-acid chain; its full sequence is Inactive metallocarboxypeptidase ECM14 (607 aa).

A signal peptide spans 1–21 (MRLFTHGQVLALLAFVNTISA). Residues 22–174 (IPSFSTNSYP…QTIYESYPSP (153 aa)) constitute a propeptide that is removed on maturation. Residues 202 to 522 (NYQPLSVIVP…NAVMMLGRFL (321 aa)) enclose the Peptidase M14 domain. Residues His264 and Glu267 each coordinate Zn(2+). Substrate is bound by residues 264-267 (HARE), Arg322, and 339-340 (DR). A disulfide bridge connects residues Cys333 and Cys356. N-linked (GlcNAc...) asparagine glycosylation occurs at Asn349. His396 serves as a coordination point for Zn(2+). 397–398 (SY) serves as a coordination point for substrate. The disordered stretch occupies residues 539-607 (QRPNKDDKPI…GWGFRRLRKR (69 aa)). Residues 550–571 (NDDDDDDNDDDDDDDDDADTND) are compositionally biased toward acidic residues. The segment covering 573-590 (GIGRKDDSWVPDEYKGDN) has biased composition (basic and acidic residues).

It belongs to the peptidase M14 family. The cofactor is Zn(2+).

The protein resides in the vacuole. It localises to the secreted. In terms of biological role, inactive carboxypeptidase that may play a role in cell wall organization and biogenesis. This chain is Inactive metallocarboxypeptidase ECM14 (ECM14), found in Ajellomyces capsulatus (strain NAm1 / WU24) (Darling's disease fungus).